The chain runs to 727 residues: Sodium-dependent neutral amino acid transporter SLC6A17 (727 aa).

Over 1 to 68 the chain is Cytoplasmic; that stretch reads MPKNSKVTQR…DRPAWNSKLQ (68 aa). A phosphoserine mark is found at S13 and S20. A helical transmembrane segment spans residues 69–89; it reads YILAQIGFSVGLGNIWRFPYL. Topologically, residues 90–96 are extracellular; the sequence is CQKNGGG. The chain crosses the membrane as a helical span at residues 97-116; it reads AYLVPYLVLLIIIGIPLFFL. Residues 117–140 lie on the Cytoplasmic side of the membrane; it reads ELAVGQRIRRGSIGVWHYVCPRLG. A helical membrane pass occupies residues 141-161; it reads GIGFSSCIVCLFVGLYYNVII. The Extracellular portion of the chain corresponds to 162–224; it reads GWSVFYFFKS…NSISESGGLN (63 aa). An N-linked (GlcNAc...) asparagine glycan is attached at N186. A helical transmembrane segment spans residues 225-243; that stretch reads WKMTLCLLVAWSIVGMAVV. The Cytoplasmic portion of the chain corresponds to 244–251; sequence KGIQSSGK. The chain crosses the membrane as a helical span at residues 252 to 269; the sequence is VMYFSSLFPYVVLACFLV. Residues 270-304 lie on the Extracellular side of the membrane; the sequence is RGLLLRGAVDGILHMFTPKLDKMLDPQVWREAATQ. Residues 305-322 traverse the membrane as a helical segment; that stretch reads VFFALGLGFGGVIAFSSY. The Cytoplasmic segment spans residues 323-333; that stretch reads NKQDNNCHFDA. The chain crosses the membrane as a helical span at residues 334 to 355; it reads ALVSFINFFTSVLATLVVFAVL. Residues 356–451 are Extracellular-facing; that stretch reads GFKANIMNEK…FIAFTEAMTH (96 aa). At Y377 the chain carries Phosphotyrosine. An N-linked (GlcNAc...) asparagine glycan is attached at N393. Residues 452-471 form a helical membrane-spanning segment; it reads FPASPFWSVMFFLMLINLGL. The Cytoplasmic portion of the chain corresponds to 472–494; the sequence is GSMIGTMAGITTPIIDTFKVPKE. The helical transmembrane segment at 495 to 513 threads the bilayer; the sequence is MFTVGCCVFAFFVGLLFVQ. The Extracellular segment spans residues 514-528; the sequence is RSGNYFVTMFDDYSA. The chain crosses the membrane as a helical span at residues 529–549; it reads TLPLTVIVILENIAVAWIYGT. Topologically, residues 550 to 569 are cytoplasmic; the sequence is KKFMQELTEMLGFQPYRFYF. A helical membrane pass occupies residues 570–591; sequence YMWKFVSPLCMAVLTTASIIQL. At 592-618 the chain is on the extracellular side; that stretch reads GVSPPGYSAWIKEEAAERYLYFPNWAM. A helical membrane pass occupies residues 619–641; sequence ALLITLIAVATLPIPVVFILRHF. Over 642 to 727 the chain is Cytoplasmic; that stretch reads HLLSDGSNTL…LLASTPESEL (86 aa). Phosphoserine is present on residues S665 and S701. The segment at 680-727 is disordered; the sequence is VPSEAPSPMPTHRSYLGPGSTSPLDNSNNPNGRYGSGYLLASTPESEL. Positions 698–710 are enriched in polar residues; the sequence is GSTSPLDNSNNPN.

This sequence belongs to the sodium:neurotransmitter symporter (SNF) (TC 2.A.22) family. In terms of tissue distribution, expressed in the brain. The strongest expression levels in embryonic, postnatal, and adult stages are found in both cortical and hippocampal tissues.

The protein resides in the cytoplasmic vesicle. It is found in the secretory vesicle. Its subcellular location is the synaptic vesicle membrane. The protein localises to the postsynapse. It localises to the presynapse. It carries out the reaction L-proline(in) + Na(+)(in) = L-proline(out) + Na(+)(out). The enzyme catalyses L-leucine(in) + Na(+)(in) = L-leucine(out) + Na(+)(out). The catalysed reaction is glycine(in) + Na(+)(in) = glycine(out) + Na(+)(out). It catalyses the reaction L-alanine(in) + Na(+)(in) = L-alanine(out) + Na(+)(out). It carries out the reaction L-glutamine(in) + Na(+)(in) = L-glutamine(out) + Na(+)(out). In terms of biological role, synaptic vesicle transporter with apparent selectivity for neutral amino acids. The transport is sodium-coupled but chloride-independent, likely driven by the proton electrochemical gradient generated by vacuolar H(+)-ATPase in an overall electrogenic mechanism. May contribute to the synaptic uptake of neurotransmitter precursors in a process coupled in part to vesicle exocytosis. The chain is Sodium-dependent neutral amino acid transporter SLC6A17 from Mus musculus (Mouse).